Here is a 315-residue protein sequence, read N- to C-terminus: tRNA-dihydrouridine(16) synthase (315 aa).

FMN contacts are provided by residues 7 to 9 (PME) and glutamine 68. Cysteine 98 (proton donor) is an active-site residue. FMN is bound by residues lysine 139, 199–201 (NGE), and 223–224 (GR).

The protein belongs to the Dus family. DusC subfamily. Requires FMN as cofactor.

It catalyses the reaction 5,6-dihydrouridine(16) in tRNA + NADP(+) = uridine(16) in tRNA + NADPH + H(+). It carries out the reaction 5,6-dihydrouridine(16) in tRNA + NAD(+) = uridine(16) in tRNA + NADH + H(+). Catalyzes the synthesis of 5,6-dihydrouridine (D), a modified base found in the D-loop of most tRNAs, via the reduction of the C5-C6 double bond in target uridines. Specifically modifies U16 in tRNAs. This Shewanella oneidensis (strain ATCC 700550 / JCM 31522 / CIP 106686 / LMG 19005 / NCIMB 14063 / MR-1) protein is tRNA-dihydrouridine(16) synthase.